Here is a 360-residue protein sequence, read N- to C-terminus: Photosystem II protein D1 1 (360 aa).

A run of 3 helical transmembrane segments spans residues 29–46 (YVGWFGVLMIPTLLAATV), 118–133 (HFLIGCACYLGRQWEL), and 142–156 (WICVAYSAPLASATA). H118 contacts chlorophyll a. Y126 contributes to the pheophytin a binding site. Residues D170 and E189 each coordinate [CaMn4O5] cluster. Residues 197–218 (FHMLGVAGVFGGSLFSAMHGSL) traverse the membrane as a helical segment. Chlorophyll a is bound at residue H198. A quinone is bound by residues H215 and 264 to 265 (SF). H215 contacts Fe cation. H272 lines the Fe cation pocket. Residues 274–288 (FLAAWPVIGIWFTAL) traverse the membrane as a helical segment. [CaMn4O5] cluster is bound by residues H332, E333, D342, and A344. A propeptide spanning residues 345-360 (AGEVAPVALTAPAING) is cleaved from the precursor.

Belongs to the reaction center PufL/M/PsbA/D family. As to quaternary structure, PSII is composed of 1 copy each of membrane proteins PsbA, PsbB, PsbC, PsbD, PsbE, PsbF, PsbH, PsbI, PsbJ, PsbK, PsbL, PsbM, PsbT, PsbX, PsbY, PsbZ, Psb30/Ycf12, peripheral proteins PsbO, CyanoQ (PsbQ), PsbU, PsbV and a large number of cofactors. It forms dimeric complexes. Requires The D1/D2 heterodimer binds P680, chlorophylls that are the primary electron donor of PSII, and subsequent electron acceptors. It shares a non-heme iron and each subunit binds pheophytin, quinone, additional chlorophylls, carotenoids and lipids. D1 provides most of the ligands for the Mn4-Ca-O5 cluster of the oxygen-evolving complex (OEC). There is also a Cl(-1) ion associated with D1 and D2, which is required for oxygen evolution. The PSII complex binds additional chlorophylls, carotenoids and specific lipids. as cofactor. Post-translationally, tyr-161 forms a radical intermediate that is referred to as redox-active TyrZ, YZ or Y-Z. C-terminally processed by CtpA; processing is essential to allow assembly of the oxygen-evolving complex and thus photosynthetic growth.

It localises to the cellular thylakoid membrane. The enzyme catalyses 2 a plastoquinone + 4 hnu + 2 H2O = 2 a plastoquinol + O2. Photosystem II (PSII) is a light-driven water:plastoquinone oxidoreductase that uses light energy to abstract electrons from H(2)O, generating O(2) and a proton gradient subsequently used for ATP formation. It consists of a core antenna complex that captures photons, and an electron transfer chain that converts photonic excitation into a charge separation. The D1/D2 (PsbA/PsbD) reaction center heterodimer binds P680, the primary electron donor of PSII as well as several subsequent electron acceptors. This Nostoc sp. (strain PCC 7120 / SAG 25.82 / UTEX 2576) protein is Photosystem II protein D1 1.